The primary structure comprises 874 residues: DNA primase (874 aa).

The CHC2-type zinc-finger motif lies at 786–824 (CLRHTHRASSKNVRVFLVLYYTSQAITVTFMSQCFAGRC). The segment covering 848-857 (ASQDSTTSQL) has biased composition (polar residues). Residues 848-874 (ASQDSTTSQLARRRDRQDGSFSETLPN) are disordered.

It belongs to the herpesviridae DNA primase family. In terms of assembly, associates with the helicase and the primase-associated factor to form the helicase-primase factor.

It is found in the host nucleus. In terms of biological role, essential component of the helicase/primase complex. Unwinds the DNA at the replication forks and generates single-stranded DNA for both leading and lagging strand synthesis. The primase initiates primer synthesis and thereby produces large amount of short RNA primers on the lagging strand that the polymerase elongates using dNTPs. In Epstein-Barr virus (strain B95-8) (HHV-4), this protein is DNA primase.